The chain runs to 405 residues: Putative colanic acid biosynthesis glycosyl transferase WcaC (405 aa).

The protein operates within slime biogenesis; slime polysaccharide biosynthesis. This Escherichia coli (strain K12) protein is Putative colanic acid biosynthesis glycosyl transferase WcaC (wcaC).